The sequence spans 234 residues: MSGLHILAFGAHADDVEIGMAGTIAKYTKQGYEVGICDLTEADLSSNGTIELRKEEAKAAARIMGVKTRLNLAMPDRGLYMKEEYIREIVKVIRTYKPKLVFAPYYEDRHPDHANCAKLVEEAIFSAGIRKYMPEVPPHRVESFYHYMINGFHKPNFCIDISEYVSQKVEALEAYESQFSTGSDGVKTPLTEGYVETVVAREKMFGKEVGVLYAEGFMSKKPVLLHADLIGGCK.

Zn(2+)-binding residues include histidine 12, aspartate 15, and histidine 113.

Belongs to the PIGL family. It depends on Zn(2+) as a cofactor.

It catalyses the reaction (S)-malyl N-acetyl-alpha-D-glucosaminide + H2O = (S)-malyl alpha-D-glucosaminide + acetate. Its activity is regulated as follows. Inhibited by BSH. Involved in bacillithiol (BSH) biosynthesis. Catalyzes the second step of the pathway, the deacetylation of N-acetylglucosaminylmalate (GlcNAc-Mal) to glucosamine malate (GlcN-Mal). The protein is N-acetyl-alpha-D-glucosaminyl L-malate deacetylase 1 of Bacillus anthracis.